Here is a 117-residue protein sequence, read N- to C-terminus: Anti-sigma F factor antagonist (117 aa).

The region spanning 3 to 113 is the STAS domain; it reads LQIEMEHHRG…DNEVNALTEL (111 aa). Serine 58 is modified (phosphoserine).

The protein belongs to the anti-sigma-factor antagonist family. Phosphorylated by SpoIIAB on a serine residue.

Its function is as follows. In the phosphorylated form it could act as an anti-anti-sigma factor that counteracts SpoIIAB and thus releases sigma f from inhibition. The sequence is that of Anti-sigma F factor antagonist (spoIIAA) from Paenibacillus polymyxa (Bacillus polymyxa).